Here is a 925-residue protein sequence, read N- to C-terminus: Protein translocase subunit SecA (925 aa).

Residues glutamine 87, 105–109 (GEGKT), and aspartate 531 contribute to the ATP site. The tract at residues 867-909 (AAGADMRFQHSQPESVLHKPEAGEGEEAQPFRRETPKVGRNDP) is disordered. A compositionally biased stretch (basic and acidic residues) spans 895 to 906 (QPFRRETPKVGR). Cysteine 910, cysteine 912, cysteine 921, and histidine 922 together coordinate Zn(2+).

The protein belongs to the SecA family. In terms of assembly, monomer and homodimer. Part of the essential Sec protein translocation apparatus which comprises SecA, SecYEG and auxiliary proteins SecDF-YajC and YidC. It depends on Zn(2+) as a cofactor.

The protein localises to the cell inner membrane. It is found in the cytoplasm. It catalyses the reaction ATP + H2O + cellular proteinSide 1 = ADP + phosphate + cellular proteinSide 2.. Functionally, part of the Sec protein translocase complex. Interacts with the SecYEG preprotein conducting channel. Has a central role in coupling the hydrolysis of ATP to the transfer of proteins into and across the cell membrane, serving both as a receptor for the preprotein-SecB complex and as an ATP-driven molecular motor driving the stepwise translocation of polypeptide chains across the membrane. This chain is Protein translocase subunit SecA, found in Thioalkalivibrio sulfidiphilus (strain HL-EbGR7).